A 51-amino-acid chain; its full sequence is Large ribosomal subunit protein eL40 (51 aa).

This sequence belongs to the eukaryotic ribosomal protein eL40 family.

The protein is Large ribosomal subunit protein eL40 of Thermofilum pendens (strain DSM 2475 / Hrk 5).